The primary structure comprises 560 residues: Developmental and secondary metabolism regulator veA (560 aa).

One can recognise a Velvet domain in the interval 35–241 (GRRLWYRMRV…AEQGCRVRIR (207 aa)). The Nuclear localization signal signature appears at 49–54 (ERARAC). Disordered regions lie at residues 49–70 (ERAR…VDPP), 171–197 (KEDK…ATGG), and 250–560 (DGKG…RLRY). Positions 171-183 (KEDKDKDKERDVE) are enriched in basic and acidic residues. Residues 336-355 (AAPPQPFAQPPSVPASPVYP) are compositionally biased toward pro residues. Over residues 395-405 (PRRESIHHDYR) the composition is skewed to basic and acidic residues. A compositionally biased stretch (pro residues) spans 411–439 (QLPPLPPPPYYPPTPQQSHMPPPQPPQVL). Residues 444-453 (IDSNSKSNNR) are compositionally biased toward polar residues. Residues 455–496 (PMPSPTALANSAPRPLASLAPLAPLMQSTSSSAGKGPVHPAT) form a PEST region. Residues 461–479 (ALANSAPRPLASLAPLAPL) show a composition bias toward low complexity. Composition is skewed to basic and acidic residues over residues 508 to 535 (RAHD…RSED) and 546 to 560 (RRAD…RLRY).

Belongs to the velvet family. VeA subfamily. Component of the heterotrimeric velvet complex composed of laeA, veA and velB; VeA acting as a bridging protein between laeA and velB.

It is found in the nucleus. It localises to the cytoplasm. Functionally, component of the velvet transcription factor complex that controls sexual/asexual developmental ratio in response to light, promoting sexual development in the darkness while stimulating asexual sporulation under illumination. The velvet complex acts as a global regulator for secondary metabolite gene expression. Positively regulates chaetoglobosin A biosynthesis by controlling the expression of core genes of the chaetoglobosin A biosynthetic gene cluster and other relevant regulators in a light-dependent manner. VeA directly regulates transcription factors brlA, laeA, and the chaetoglobosin A cluster-specific transcription regulator cheR. Also directly regulates the expression of one of the chaetoglobosin A cluster cytochrome P450 monooxygenases (cheE or cheG), but only indirectly regulates the expression of the PKS-NRPS hybrid cheA. Moreover, VeA has a significant effect on the asexual spores production, irrespective of light or dark condition. The sequence is that of Developmental and secondary metabolism regulator veA from Chaetomium globosum (strain ATCC 6205 / CBS 148.51 / DSM 1962 / NBRC 6347 / NRRL 1970) (Soil fungus).